Consider the following 331-residue polypeptide: Hyaluronidase A (331 aa).

2 disulfide bridges follow: cysteine 19/cysteine 308 and cysteine 185/cysteine 197. N-linked (GlcNAc...) asparagine glycosylation is found at asparagine 79 and asparagine 99. Glutamate 109 functions as the Proton donor in the catalytic mechanism. Asparagine 127 is a glycosylation site (N-linked (GlcNAc...) asparagine). N-linked (GlcNAc...) asparagine glycosylation occurs at asparagine 325.

Belongs to the glycosyl hydrolase 56 family. In terms of tissue distribution, expressed by the venom gland.

It localises to the secreted. It catalyses the reaction Random hydrolysis of (1-&gt;4)-linkages between N-acetyl-beta-D-glucosamine and D-glucuronate residues in hyaluronate.. Functionally, hydrolyzes high molecular weight hyaluronic acid to produce small oligosaccharides. The chain is Hyaluronidase A from Vespula vulgaris (Yellow jacket).